Here is a 520-residue protein sequence, read N- to C-terminus: Dynein axonemal assembly factor 8 (520 aa).

Disordered stretches follow at residues 93–202 (PVLV…LRQE), 217–256 (RDAC…EGPP), 328–366 (CARK…QLAQ), and 388–520 (DHLS…LEQL). Over residues 111–125 (RTKDASSQEGRDPGR) the composition is skewed to basic and acidic residues. Position 161 is a phosphoserine (Ser-161). At Ser-351 the chain carries Phosphoserine. The span at 401-410 (DSEEEEEEEM) shows a compositional bias: acidic residues. Positions 420 to 437 (SPSSLGLRTCTGKSQLLQ) are enriched in polar residues.

Expressed in respiratory ciliated cells (at protein level).

It is found in the dynein axonemal particle. It localises to the cytoplasm. Functionally, in cyliated cells, dynein axonemal particle-specific protein required for deployment of ODA to the axoneme. Interacts with outer dynein arm (ODA) subunits. The sequence is that of Dynein axonemal assembly factor 8 from Homo sapiens (Human).